Here is a 152-residue protein sequence, read N- to C-terminus: Interleukin-3 (152 aa).

The first 19 residues, 1–19 (MSCLPVLLLLQLLVSPGLQ), serve as a signal peptide directing secretion. Residues Asn-34 and Asn-89 are each glycosylated (N-linked (GlcNAc...) asparagine). Residues Cys-35 and Cys-103 are joined by a disulfide bond.

The protein belongs to the IL-3 family. Monomer. Activated T-cells, mast cells, natural killer cells.

It localises to the secreted. Its function is as follows. Granulocyte/macrophage colony-stimulating factors are cytokines that act in hematopoiesis by controlling the production, differentiation, and function of 2 related white cell populations of the blood, the granulocytes and the monocytes-macrophages. In terms of biological role, this CSF induces granulocytes, macrophages, mast cells, stem cells, erythroid cells, eosinophils and megakaryocytes. The chain is Interleukin-3 (IL3) from Hylobates lar (Lar gibbon).